A 340-amino-acid chain; its full sequence is 3-isopropylmalate dehydrogenase (340 aa).

Residues arginine 88, arginine 98, arginine 122, and aspartate 212 each contribute to the substrate site. 3 residues coordinate Mg(2+): aspartate 212, aspartate 236, and aspartate 240. 272-284 (GSAPDIMGKGIAD) is a binding site for NAD(+).

Belongs to the isocitrate and isopropylmalate dehydrogenases family. LeuB type 2 subfamily. Homodimer. Mg(2+) serves as cofactor. Requires Mn(2+) as cofactor.

It is found in the cytoplasm. It catalyses the reaction (2R,3S)-3-isopropylmalate + NAD(+) = 4-methyl-2-oxopentanoate + CO2 + NADH. The protein operates within amino-acid biosynthesis; L-leucine biosynthesis; L-leucine from 3-methyl-2-oxobutanoate: step 3/4. In terms of biological role, catalyzes the oxidation of 3-carboxy-2-hydroxy-4-methylpentanoate (3-isopropylmalate) to 3-carboxy-4-methyl-2-oxopentanoate. The product decarboxylates to 4-methyl-2 oxopentanoate. This Corynebacterium efficiens (strain DSM 44549 / YS-314 / AJ 12310 / JCM 11189 / NBRC 100395) protein is 3-isopropylmalate dehydrogenase.